A 473-amino-acid polypeptide reads, in one-letter code: BPI fold-containing family B member 3 (473 aa).

Residues 1 to 20 form the signal peptide; sequence MMLGVYTLLLLWGLATPCLG. N-linked (GlcNAc...) asparagine glycosylation is present at N139. C161 and C196 are joined by a disulfide.

This sequence belongs to the BPI/LBP/Plunc superfamily. BPI/LBP family.

It is found in the secreted. May have the capacity to recognize and bind specific classes of odorants. May act as a carrier molecule, transporting odorants across the mucus layer to access receptor sites. May serve as a primary defense mechanism by recognizing and removing potentially harmful odorants or pathogenic microorganisms from the mucosa or clearing excess odorant from mucus to enable new odorant stimuli to be received. This is BPI fold-containing family B member 3 from Mus musculus (Mouse).